The chain runs to 596 residues: Nitrite reductase (596 aa).

An N-terminal signal peptide occupies residues 1–29; sequence MRQRTPFARPGLLASAALALVLGPLAASA. The N-terminal tail stretch occupies residues 30 to 76; the sequence is QEQVAPPKDPAAALEDHKTRTDNRYEPSLDNLAQQDVAAPGAPEGVS. Residue His46 participates in heme c binding. Residues Tyr54 and Ser57 each contribute to the heme d1 site. Residues 77–162 enclose the Cytochrome c domain; sequence ALSDAQYNEA…ANYLLLDPAA (86 aa). The heme c site is built by Cys94, Cys97, His98, Lys108, and Tyr122. Heme d1 is bound by residues Trp138, Arg203, His229, Arg232, Arg245, Arg272, Tyr292, Arg420, Gln536, and Thr583. The interval 163–596 is D1-heme domain; the sequence is PPEFGMKEMR…NVYNTMTDTY (434 aa).

As to quaternary structure, homodimer. Heme c serves as cofactor. Requires heme as cofactor.

It localises to the periplasm. It carries out the reaction nitric oxide + Fe(III)-[cytochrome c] + H2O = Fe(II)-[cytochrome c] + nitrite + 2 H(+). The catalysed reaction is A + NH4(+) + H2O = hydroxylamine + AH2 + H(+). The polypeptide is Nitrite reductase (nirS) (Paracoccus pantotrophus (Thiosphaera pantotropha)).